Reading from the N-terminus, the 534-residue chain is SWI/SNF complex component SNF12 homolog (534 aa).

Over residues 1-12 (MSGNNNNPQKPQ) the composition is skewed to polar residues. 2 disordered regions span residues 1–33 (MSGN…PGNQ) and 78–132 (MTMN…SPMR). Residues 94 to 105 (PSSPSLTTPGSL) show a composition bias toward low complexity. An SWIB/MDM2 domain is found at 314 to 391 (YVPEKFKLST…SQKISHHLSP (78 aa)).

This sequence belongs to the SMARCD family. Part of a SWI-SNF complex.

It is found in the nucleus. Involved in transcriptional activation and repression of select genes by chromatin remodeling (alteration of DNA-nucleosome topology). The sequence is that of SWI/SNF complex component SNF12 homolog from Arabidopsis thaliana (Mouse-ear cress).